Here is a 464-residue protein sequence, read N- to C-terminus: Sensor protein IrlS (464 aa).

Topologically, residues 1-13 (MIRRLLPRTLRAR) are periplasmic. The helical transmembrane segment at 14 to 34 (LTALIILSTAATLALSGVALY) threads the bilayer. The Cytoplasmic portion of the chain corresponds to 35–166 (SALHNRLVGM…DHALLRAYAY (132 aa)). Residues 167-187 (TVVVIEVLAVVLTAALAYGIA) traverse the membrane as a helical segment. The HAMP domain maps to 188–241 (MLGLSPLRRLVARAEQMSSSRLAQPLPELDTSGELKEMEHAFNAMLKRLDESFV). Residues 188–464 (MLGLSPLRRL…FWLKFPAHAA (277 aa)) lie on the Periplasmic side of the membrane. The 215-residue stretch at 249–463 (NLAHDMRTPL…TFWLKFPAHA (215 aa)) folds into the Histidine kinase domain. Histidine 252 carries the phosphohistidine; by autocatalysis modification.

It localises to the cell inner membrane. It catalyses the reaction ATP + protein L-histidine = ADP + protein N-phospho-L-histidine.. Functionally, member of the two-component regulatory system IrlR/IrlS. May be involved in invasion of eukaryotic cells and heavy-metal resistance. Probably activates IrlR by phosphorylation. The sequence is that of Sensor protein IrlS (irlS) from Burkholderia pseudomallei (strain K96243).